We begin with the raw amino-acid sequence, 123 residues long: Large ribosomal subunit protein bL12 (123 aa).

It belongs to the bacterial ribosomal protein bL12 family. As to quaternary structure, homodimer. Part of the ribosomal stalk of the 50S ribosomal subunit. Forms a multimeric L10(L12)X complex, where L10 forms an elongated spine to which 2 to 4 L12 dimers bind in a sequential fashion. Binds GTP-bound translation factors.

Its function is as follows. Forms part of the ribosomal stalk which helps the ribosome interact with GTP-bound translation factors. Is thus essential for accurate translation. This is Large ribosomal subunit protein bL12 from Neisseria meningitidis serogroup C (strain 053442).